The sequence spans 1985 residues: Histone-lysine N-methyltransferase SETD1B (1985 aa).

Residues 1–11 show a composition bias toward basic residues; it reads MENSHPHHHHQ. Residues 1–25 are disordered; sequence MENSHPHHHHQQPPPQPGPSGERRN. Positions 67–97 are interaction with WDR82; that stretch reads VEDPRVVGIWTKNKELELSVPKFKIDEFYVG. Residues 92 to 180 form the RRM domain; it reads DEFYVGPVPP…NIIHVELDTK (89 aa). 5 disordered regions span residues 234 to 304, 353 to 710, 955 to 1480, 1519 to 1624, and 1658 to 1687; these read GCGS…QDPT, GSSG…PPPA, VKRK…RTGP, QLPP…STKL, and RGPWRRPPKKRHEDLVAPSASPEPSPPQPL. Polar residues-rich tracts occupy residues 242 to 258, 264 to 273, 281 to 304, and 353 to 365; these read VTPNSGGTPFSQDTAYS, TPNSYGQGTP, PFSQDSSYSSRQPTPSYLFSQDPT, and GSSGTPFKAQSQD. Residues 366 to 381 show a composition bias toward low complexity; that stretch reads ATTFAHTPPPAQTATA. 3 stretches are compositionally biased toward pro residues: residues 393-404, 423-433, and 440-449; these read TPAPPFPPPPEE, PAPPPLPPAEP, and GTPPGPPPPD. A compositionally biased stretch (basic and acidic residues) spans 484–512; it reads EKPHDSLDSRIEMLLKEQRTKLPFLREQD. The segment covering 522–535 has biased composition (low complexity); that stretch reads SPISSSSSQLSPLS. Residues 583-594 are compositionally biased toward pro residues; sequence PRPPPEPGPPDP. A compositionally biased stretch (acidic residues) spans 628-637; sequence EDMEISDDEM. Residues 650–669 show a composition bias toward low complexity; it reads PMVVTPGAGAVAAPNVLAPN. Pro residues predominate over residues 670-710; sequence LPLPPPPGFPPLPPPPPPPPPQPGFPMPPPLPPPPPPPPPA. Residues Ser-977 and Ser-985 each carry the phosphoserine modification. A compositionally biased stretch (basic and acidic residues) spans 986–1006; that stretch reads ERERDRDIADAPCELTKRDPK. Position 1022 is a phosphoserine (Ser-1022). The segment covering 1032–1055 has biased composition (low complexity); sequence LSASSSSSASSSSGSSTTSPSSSA. The segment covering 1058–1083 has biased composition (acidic residues); it reads KEEEDRESTEEEEEEEEEEAEEEEEE. Residues 1087–1097 show a composition bias toward low complexity; the sequence is SRISSPSSSSS. Residues 1100–1120 are compositionally biased toward acidic residues; sequence KDDEDDNEADSDGQIDSDIDD. The span at 1143-1178 shows a compositional bias: low complexity; sequence SITTSKAPAESSSSSSESSGSSEFESSSESESSSSS. Residues 1179-1202 are compositionally biased toward acidic residues; sequence SEDEEEMTVPGVEEEEEEEEEEEK. A compositionally biased stretch (low complexity) spans 1205-1217; the sequence is AMAAATVVAMAEE. The span at 1247-1261 shows a compositional bias: acidic residues; the sequence is GTEEEVDIEAEDEVP. Phosphoserine is present on residues Ser-1283, Ser-1301, and Ser-1354. Over residues 1331–1373 the composition is skewed to pro residues; sequence EPPPMLSLPLQPPLPPPRLLRPPSPPPEPETPEPPKPPVPLEP. Positions 1402-1442 are enriched in low complexity; sequence PGGEPPLSGSSSGLSLSSPQVPGSPFSYPSPSPGLSSGGLP. Residues 1535–1544 show a composition bias toward basic residues; sequence IKRKPGRPRR. Composition is skewed to pro residues over residues 1600 to 1619 and 1678 to 1687; these read PAPPPPLPPQPPPPPPPPPV and SPEPSPPQPL. 2 positions are modified to phosphoserine: Ser-1678 and Ser-1682. The WDR5 interaction motif (WIN) motif lies at 1764-1769; sequence GCARSE. The segment at 1786 to 1819 is disordered; sequence SRASTDEPPMDTQGMSIPAQPHASTRAGSERRSE. A RxxxRR motif motif is present at residues 1817–1822; sequence RSEQRR. An SET domain is found at 1846–1963; sequence KKLKFCKSHI…VNEEITYDYK (118 aa). Tyr-1962 contacts S-adenosyl-L-methionine. The Post-SET domain maps to 1969 to 1985; the sequence is VKIPCLCGSENCRGTLN.

The protein belongs to the class V-like SAM-binding methyltransferase superfamily. In terms of assembly, component of the SET1B/COMPASS complex composed of the catalytic subunit SETD1B, WDR5, WDR82, RBBP5, ASH2L/ASH2, CXXC1/CFP1, HCFC1, DPY30 homotrimer and BOD1. Forms a core complex with the evolutionary conserved subcomplex WRAD composed of WDR5, RBBP5, ASH2L/ASH2 and DPY30 subunits; WRAD differentially stimulates the methyltransferase activity. Interacts with HCFC1 and ASH2L/ASH2. Interacts (via the RRM domain) with WDR82. Interacts (via the RRM domain) with hyperphosphorylated C-terminal domain (CTD) of RNA polymerase II large subunit (POLR2A) only in the presence of WDR82. Binds specifically to CTD heptad repeats phosphorylated on 'Ser-5' of each heptad. Interacts with RBM15. Interacts (via WIN motif) with WDR5. Widely expressed.

The protein resides in the nucleus. Its subcellular location is the nucleus speckle. It localises to the chromosome. The protein localises to the cytoplasm. The enzyme catalyses L-lysyl(4)-[histone H3] + S-adenosyl-L-methionine = N(6)-methyl-L-lysyl(4)-[histone H3] + S-adenosyl-L-homocysteine + H(+). It carries out the reaction N(6)-methyl-L-lysyl(4)-[histone H3] + S-adenosyl-L-methionine = N(6),N(6)-dimethyl-L-lysyl(4)-[histone H3] + S-adenosyl-L-homocysteine + H(+). It catalyses the reaction N(6),N(6)-dimethyl-L-lysyl(4)-[histone H3] + S-adenosyl-L-methionine = N(6),N(6),N(6)-trimethyl-L-lysyl(4)-[histone H3] + S-adenosyl-L-homocysteine + H(+). Functionally, histone methyltransferase that catalyzes methyl group transfer from S-adenosyl-L-methionine to the epsilon-amino group of 'Lys-4' of histone H3 (H3K4) via a non-processive mechanism. Part of chromatin remodeling machinery, forms H3K4me1, H3K4me2 and H3K4me3 methylation marks at active chromatin sites where transcription and DNA repair take place. Plays an essential role in regulating the transcriptional programming of multipotent hematopoietic progenitor cells and lymphoid lineage specification during hematopoiesis. The polypeptide is Histone-lysine N-methyltransferase SETD1B (Setd1b) (Mus musculus (Mouse)).